Reading from the N-terminus, the 381-residue chain is Cytosolic acyl coenzyme A thioester hydrolase (381 aa).

In terms of domain architecture, HotDog ACOT-type 1 spans 51–169 (LGHCVTMGRI…TLWYVPLSLK (119 aa)). Asn-67 is a catalytic residue. N6-acetyllysine occurs at positions 169 and 199. In terms of domain architecture, HotDog ACOT-type 2 spans 225–339 (SYSQSSLIHL…FFTYVSLNQE (115 aa)). Residue Asp-256 is part of the active site. The residue at position 284 (Lys-284) is an N6-acetyllysine. The interval 342–381 (PMPVPQLVPETEDEKKRFEEGKGRYLQMKAKRQGHTEPQP) is disordered. Positions 354 to 364 (DEKKRFEEGKG) are enriched in basic and acidic residues.

As to quaternary structure, homohexamer. As to expression, widely expressed with highest levels in brain. High levels also found in thymus, large intestine and testis. Negligible in muscle and adipose tissue. In the central and peripheral nervous systems, displays a predominantly neuronal localization with highest expression in cell bodies and neurites.

Its subcellular location is the cytoplasm. It localises to the cytosol. The enzyme catalyses hexadecanoyl-CoA + H2O = hexadecanoate + CoA + H(+). It catalyses the reaction dodecanoyl-CoA + H2O = dodecanoate + CoA + H(+). It carries out the reaction tetradecanoyl-CoA + H2O = tetradecanoate + CoA + H(+). The catalysed reaction is decanoyl-CoA + H2O = decanoate + CoA + H(+). The enzyme catalyses octanoyl-CoA + H2O = octanoate + CoA + H(+). It catalyses the reaction octadecanoyl-CoA + H2O = octadecanoate + CoA + H(+). It carries out the reaction (9Z)-octadecenoyl-CoA + H2O = (9Z)-octadecenoate + CoA + H(+). It participates in lipid metabolism; fatty acid metabolism. Functionally, catalyzes the hydrolysis of acyl-CoAs into free fatty acids and coenzyme A (CoASH), regulating their respective intracellular levels. Preferentially hydrolyzes palmitoyl-CoA, but has a broad specificity acting on other fatty acyl-CoAs with chain-lengths of C8-C18. May play an important physiological function in brain. The chain is Cytosolic acyl coenzyme A thioester hydrolase (Acot7) from Mus musculus (Mouse).